The primary structure comprises 620 residues: Ran-binding protein 10 (620 aa).

Positions 1-34 (MAAATADPGAGSPQVGDSSGGATGCGLPSPGEQE) are disordered. N-acetylalanine is present on Ala2. Residues 35-222 (LSRRLQRLYP…VDANFGQQPF (188 aa)) form the B30.2/SPRY domain. One can recognise a LisH domain in the interval 253-285 (WQAVLQNMVSSYLVHHGYCATATAFARMTETPI). Residues 291–348 (SIKNRQKIQKLVLEGRVGEAIETTQRFYPGLLEHNPNLLFMLKCRQFVEMVNGTDSEV) enclose the CTLH domain. Over residues 347–398 (EVRSLSSRSPKSQDSYPGSPSLSPRHGPTSSHTHNTGADSPSCSNGVASTKS) the composition is skewed to polar residues. The interval 347-459 (EVRSLSSRSP…TSDSEMEMEA (113 aa)) is disordered. A Phosphoserine modification is found at Ser361. Phosphotyrosine is present on Tyr362. Ser365, Ser367, Ser369, and Ser422 each carry phosphoserine. Residues 409 to 436 (SSSSSSSSSSSSSSPSSVNYSESNSTDS) show a composition bias toward low complexity. Polar residues predominate over residues 437 to 450 (TKSQPHSSTSNQET). Residues Ser451 and Ser453 each carry the phosphoserine modification.

The protein belongs to the RANBP9/10 family. In terms of assembly, may form homodimers. Identified in the CTLH complex that contains GID4, RANBP9 and/or RANBP10, MKLN1, MAEA, RMND5A (or alternatively its paralog RMND5B), GID8, ARMC8, WDR26 and YPEL5. Within this complex, MAEA, RMND5A (or alternatively its paralog RMND5B), GID8, WDR26, and RANBP9 and/or RANBP10 form the catalytic core, while GID4, MKLN1, ARMC8 and YPEL5 have ancillary roles. Interacts with RAN and RANBP9. Interacts with the HGF receptor MET. Interacts with AR. Interacts with TUBB1. Interacts with YPEL5. May interact with TUBB5. Interacts with DDX4.

It is found in the cytoplasm. The protein resides in the cytosol. It localises to the nucleus. May act as an adapter protein to couple membrane receptors to intracellular signaling pathways. Core component of the CTLH E3 ubiquitin-protein ligase complex that selectively accepts ubiquitin from UBE2H and mediates ubiquitination and subsequent proteasomal degradation of the transcription factor HBP1. Enhances dihydrotestosterone-induced transactivation activity of AR, as well as dexamethasone-induced transactivation activity of NR3C1, but does not affect estrogen-induced transactivation. Acts as a guanine nucleotide exchange factor (GEF) for RAN GTPase. May play an essential role in hemostasis and in maintaining microtubule dynamics with respect to both platelet shape and function. The chain is Ran-binding protein 10 (RANBP10) from Bos taurus (Bovine).